Here is a 319-residue protein sequence, read N- to C-terminus: ATP-dependent 6-phosphofructokinase (319 aa).

An ATP-binding site is contributed by glycine 11. ADP-binding positions include 21–25 (RSVVR) and aspartate 59. ATP contacts are provided by residues 72–73 (RC) and 102–105 (GDGS). Aspartate 103 provides a ligand contact to Mg(2+). A substrate-binding site is contributed by 125 to 127 (TID). Catalysis depends on aspartate 127, which acts as the Proton acceptor. Arginine 154 lines the ADP pocket. Substrate is bound by residues arginine 162 and 169–171 (MGR). Residues 185 to 187 (GAE), arginine 211, and 213 to 215 (KKH) contribute to the ADP site. Substrate-binding positions include glutamate 222, arginine 243, and 249 to 252 (HVQR).

Belongs to the phosphofructokinase type A (PFKA) family. ATP-dependent PFK group I subfamily. Prokaryotic clade 'B1' sub-subfamily. In terms of assembly, homotetramer. Mg(2+) serves as cofactor.

The protein resides in the cytoplasm. It catalyses the reaction beta-D-fructose 6-phosphate + ATP = beta-D-fructose 1,6-bisphosphate + ADP + H(+). It participates in carbohydrate degradation; glycolysis; D-glyceraldehyde 3-phosphate and glycerone phosphate from D-glucose: step 3/4. Allosterically activated by ADP and other diphosphonucleosides, and allosterically inhibited by phosphoenolpyruvate. Its function is as follows. Catalyzes the phosphorylation of D-fructose 6-phosphate to fructose 1,6-bisphosphate by ATP, the first committing step of glycolysis. In Geobacillus stearothermophilus (Bacillus stearothermophilus), this protein is ATP-dependent 6-phosphofructokinase.